We begin with the raw amino-acid sequence, 109 residues long: FK506-binding protein (109 aa).

Residues 20-108 (GKEITVHYTG…IFEVELLKVY (89 aa)) form the PPIase FKBP-type domain.

Belongs to the FKBP-type PPIase family.

The catalysed reaction is [protein]-peptidylproline (omega=180) = [protein]-peptidylproline (omega=0). Its activity is regulated as follows. Inhibited by FK506. Its function is as follows. PPIases accelerate the folding of proteins. This chain is FK506-binding protein (fbp), found in Neisseria meningitidis serogroup A / serotype 4A (strain DSM 15465 / Z2491).